The primary structure comprises 160 residues: Ureidoglycolate lyase (160 aa).

Belongs to the ureidoglycolate lyase family. In terms of assembly, homodimer. Ni(2+) serves as cofactor.

It carries out the reaction (S)-ureidoglycolate = urea + glyoxylate. Its pathway is nitrogen metabolism; (S)-allantoin degradation. Catalyzes the catabolism of the allantoin degradation intermediate (S)-ureidoglycolate, generating urea and glyoxylate. Involved in the utilization of allantoin as nitrogen source. The polypeptide is Ureidoglycolate lyase (Salmonella gallinarum (strain 287/91 / NCTC 13346)).